We begin with the raw amino-acid sequence, 927 residues long: MQGVSSALLLSAGQLGPGAAWYRQEGSSECSWLRRSQPSELRTNFSSRWPWPRNSESRRSERLQWPGPASAKPEVASCGDSRRDYSSLPARHLSSARESSMPGALGTVNPQPVRTLVPPTLDEPLPDALRPPDDSLLLWRGLTKGPNHMGRLRNAKIHVERAVKQKKIFMIHGRYPVIRCLLRQRGWVEKKMVHPPGTALPAPQKDLDSSMLGDSDATEDEDEEENEMFRESQLLDLDGFLEFDDLDGIHALMSRMVRNETPYLIWTTRRDVLDCRFLSKDQMINHYARAGSFTTKVGLCLNLRNLPWFDEADADSFFPRCYRLGAEDDKKAFIEDFWLTAARNVLKLVVKLEEKSQSISIQAREEEAPEDTQPKKQEKKLVTVSSDFVDEALSACQEHLSSIAHKDIDKDPNSPLYLSPDDWSQFLQRYYQIVHEGAELRYLEVQVQRCEDILQQLQNVVPQLDMEGDRNIWIVKPGAKSRGRGIMCMNRLDEMLKLVDCNPMLMKDGKWIVQKYIERPLLIFGTKFDLRQWFLVTDWNPLTVWFYRDSYIRFSTQPFSLKNLDNSVHLCNNSIQRHLEASCHRHPMLPPDNMWSSQRFQAHLQEVDAPKAWSSVIVPGMKAAVIHALQTSQDNVQCRKASFELYGADFVFGEDFQPWLIEINASPTMAPSTAVTARLCAGVQADTLRVVIDRRLDRSCDTGAFELIYKQPAVEVPQYVGIRLLVEGSTIKKPVPVGHRRTGVRSSLPHLLTQQGSGESKDSGSPTHRSASRKNARAESLEHTEKPEPAAVASVSGKGKKAPFHFPSLHSKAWLPSPRVHRPQGRVLRLQHDQLVGSKALSTTGKALMTLPTAKVLMSFPPHPDLKLAPSMLKPGKVGFELCCTTWRVVLSGGIGEEGHRQRAAPRPSSAPGKGLSSTEPCSKTET.

Residues 35-47 show a composition bias toward polar residues; the sequence is RSQPSELRTNFSS. 2 disordered regions span residues 35–113 and 194–227; these read RSQP…PQPV and HPPGTALPAPQKDLDSSMLGDSDATEDEDEEENE. Acidic residues predominate over residues 216-226; that stretch reads DATEDEDEEEN. The TTL domain maps to 345–702; the sequence is VLKLVVKLEE…DRRLDRSCDT (358 aa). Residues Lys476, 482–483, 514–517, 527–529, and 571–572 each bind ATP; these read RG, QKYI, KFD, and CN. Arg482 contributes to the a protein binding site. 3 residues coordinate Mg(2+): Asp649, Glu662, and Asn664. An ATP-binding site is contributed by Glu662. 2 disordered regions span residues 735–799 and 897–927; these read VPVG…SGKG and EEGHRQRAAPRPSSAPGKGLSSTEPCSKTET. Residues 752-769 show a composition bias toward polar residues; the sequence is LTQQGSGESKDSGSPTHR. The segment covering 776–788 has biased composition (basic and acidic residues); the sequence is ARAESLEHTEKPE. Residues 916 to 927 show a composition bias toward polar residues; that stretch reads LSSTEPCSKTET.

Mg(2+) is required as a cofactor. In terms of tissue distribution, highly expressed in brain and testis. Expressed in heart, kidney, liver, lung, muscle, spleen, trachea and colon. Expressed in sperm flagellum. In the brain, specifically expressed in ependymal cilia.

It localises to the cytoplasm. The protein resides in the cytoskeleton. Its subcellular location is the cell projection. It is found in the cilium. The protein localises to the cilium axoneme. It localises to the flagellum axoneme. It catalyses the reaction L-glutamyl-[protein] + glycine + ATP = glycyl-L-glutamyl-[protein] + ADP + phosphate + H(+). Its function is as follows. Monoglycylase which modifies alpha- and beta-tubulin, adding a single glycine on the gamma-carboxyl groups of specific glutamate residues to generate monoglycine side chains within the C-terminal tail of tubulin. Not involved in elongation step of the polyglycylation reaction. Preferentially glycylates a beta-tail peptide over the alpha-tail, although shifts its preference toward alpha-tail as beta-tail glutamylation increases. Competes with polyglutamylases for modification site on beta-tubulin substrate, thereby creating an anticorrelation between glycylation and glutamylation reactions. Together with TTLL8, mediates microtubule glycylation of primary and motile cilia, which is essential for their stability and maintenance. Involved in microtubule glycylation of primary cilia in colon which controls cell proliferation of epithelial cells and plays an essential role in colon cancer development. Together with TTLL8, glycylates sperm flagella which regulates axonemal dynein motor activity, thereby controlling flagellar beat, directional sperm swimming and male fertility. The sequence is that of Tubulin monoglycylase TTLL3 from Mus musculus (Mouse).